The primary structure comprises 704 residues: Polyribonucleotide nucleotidyltransferase (704 aa).

Asp-485 and Asp-491 together coordinate Mg(2+). Positions 552–611 (PRIYTMKIDPKKIKDVIGKGGATIRALTEETGTSIDIDDDGTVKIAAVDGNAVKTVMARI) constitute a KH domain. Positions 621–689 (GAVYTGKVTR…RQGRIRLTMR (69 aa)) constitute an S1 motif domain.

It belongs to the polyribonucleotide nucleotidyltransferase family. As to quaternary structure, component of the RNA degradosome, which is a multiprotein complex involved in RNA processing and mRNA degradation. Mg(2+) is required as a cofactor.

Its subcellular location is the cytoplasm. It catalyses the reaction RNA(n+1) + phosphate = RNA(n) + a ribonucleoside 5'-diphosphate. Functionally, involved in mRNA degradation. Catalyzes the phosphorolysis of single-stranded polyribonucleotides processively in the 3'- to 5'-direction. The chain is Polyribonucleotide nucleotidyltransferase from Mannheimia succiniciproducens (strain KCTC 0769BP / MBEL55E).